Here is a 245-residue protein sequence, read N- to C-terminus: Probable phosphatase YE2421 (245 aa).

Zn(2+) contacts are provided by His-7, His-9, His-15, His-40, Glu-73, His-101, His-131, Asp-192, and His-194.

It belongs to the PHP family. In terms of assembly, homotrimer. Zn(2+) is required as a cofactor.

This Yersinia enterocolitica serotype O:8 / biotype 1B (strain NCTC 13174 / 8081) protein is Probable phosphatase YE2421.